We begin with the raw amino-acid sequence, 507 residues long: Cuticlin-4 (507 aa).

Positions 1-19 (MFHFTRILAAFLLPTLCFC) are cleaved as a signal peptide. Residues 20–471 (GYSTAPSSTV…KTCFSTSRMY (452 aa)) lie on the Extracellular side of the membrane. Residues 42 to 280 (VCETASISLL…YGCSNTQPQC (239 aa)) enclose the ZP domain. Positions 292-350 (KTTETAEPYPYDSHESGYPTRPANYPVASSRYPIPTTQAPASYPSSPAPPPPGADIDNG) are disordered. N-linked (GlcNAc...) asparagine glycans are attached at residues asparagine 374 and asparagine 408. Residues 472–492 (FTLILLCLLFATTVVVFIVIV) traverse the membrane as a helical segment. Residues 493–507 (QKQRQILAQTAFFKP) lie on the Cytoplasmic side of the membrane.

Its subcellular location is the cell membrane. Plays a role in alae formation and subsequent cuticle attachment in adults. The polypeptide is Cuticlin-4 (Caenorhabditis elegans).